The sequence spans 273 residues: Bifunctional protein FolD (273 aa).

NADP(+) contacts are provided by residues 152-154 (GRS), T179, and I220.

Belongs to the tetrahydrofolate dehydrogenase/cyclohydrolase family. As to quaternary structure, homodimer.

The catalysed reaction is (6R)-5,10-methylene-5,6,7,8-tetrahydrofolate + NADP(+) = (6R)-5,10-methenyltetrahydrofolate + NADPH. The enzyme catalyses (6R)-5,10-methenyltetrahydrofolate + H2O = (6R)-10-formyltetrahydrofolate + H(+). Its pathway is one-carbon metabolism; tetrahydrofolate interconversion. Functionally, catalyzes the oxidation of 5,10-methylenetetrahydrofolate to 5,10-methenyltetrahydrofolate and then the hydrolysis of 5,10-methenyltetrahydrofolate to 10-formyltetrahydrofolate. This chain is Bifunctional protein FolD, found in Petrotoga mobilis (strain DSM 10674 / SJ95).